Consider the following 332-residue polypeptide: Glyceraldehyde-3-phosphate dehydrogenase (332 aa).

Residues 10-11 (RI), D32, and M77 contribute to the NAD(+) site. D-glyceraldehyde 3-phosphate contacts are provided by residues 148 to 150 (SCT), T179, 208 to 209 (TG), and R231. C149 (nucleophile) is an active-site residue. N313 provides a ligand contact to NAD(+).

The protein belongs to the glyceraldehyde-3-phosphate dehydrogenase family. In terms of assembly, homotetramer.

It is found in the cytoplasm. It catalyses the reaction D-glyceraldehyde 3-phosphate + phosphate + NAD(+) = (2R)-3-phospho-glyceroyl phosphate + NADH + H(+). Its pathway is carbohydrate degradation; glycolysis; pyruvate from D-glyceraldehyde 3-phosphate: step 1/5. The polypeptide is Glyceraldehyde-3-phosphate dehydrogenase (GPDA) (Phytophthora infestans (Potato late blight agent)).